The sequence spans 347 residues: Phosphoribosylformylglycinamidine cyclo-ligase (347 aa).

This sequence belongs to the AIR synthase family.

The protein localises to the cytoplasm. The enzyme catalyses 2-formamido-N(1)-(5-O-phospho-beta-D-ribosyl)acetamidine + ATP = 5-amino-1-(5-phospho-beta-D-ribosyl)imidazole + ADP + phosphate + H(+). The protein operates within purine metabolism; IMP biosynthesis via de novo pathway; 5-amino-1-(5-phospho-D-ribosyl)imidazole from N(2)-formyl-N(1)-(5-phospho-D-ribosyl)glycinamide: step 2/2. This is Phosphoribosylformylglycinamidine cyclo-ligase from Yersinia enterocolitica serotype O:8 / biotype 1B (strain NCTC 13174 / 8081).